A 352-amino-acid polypeptide reads, in one-letter code: tRNA N6-adenosine threonylcarbamoyltransferase (352 aa).

The Fe cation site is built by His115 and His119. Substrate contacts are provided by residues 137 to 141, Asp170, Gly183, and Asn281; that span reads LVSGG. Residue Asp309 coordinates Fe cation.

The protein belongs to the KAE1 / TsaD family. It depends on Fe(2+) as a cofactor.

The protein localises to the cytoplasm. It carries out the reaction L-threonylcarbamoyladenylate + adenosine(37) in tRNA = N(6)-L-threonylcarbamoyladenosine(37) in tRNA + AMP + H(+). Required for the formation of a threonylcarbamoyl group on adenosine at position 37 (t(6)A37) in tRNAs that read codons beginning with adenine. Is involved in the transfer of the threonylcarbamoyl moiety of threonylcarbamoyl-AMP (TC-AMP) to the N6 group of A37, together with TsaE and TsaB. TsaD likely plays a direct catalytic role in this reaction. The sequence is that of tRNA N6-adenosine threonylcarbamoyltransferase from Methylocapsa acidiphila.